A 352-amino-acid chain; its full sequence is Transcription factor MYB86 (352 aa).

HTH myb-type domains follow at residues 9–61 (KQKL…INYL) and 62–116 (RPDL…KKKL). 2 consecutive DNA-binding regions (H-T-H motif) follow at residues 37–61 (WSSV…INYL) and 89–112 (WSQI…NSCL).

In terms of tissue distribution, expressed in stems, flowers and seeds. Weakly expressed in leaves and roots.

The protein resides in the nucleus. Probable transcription factor. The polypeptide is Transcription factor MYB86 (MYB86) (Arabidopsis thaliana (Mouse-ear cress)).